The chain runs to 412 residues: MEFTTSSRFSKEEEDEEQDEAGRREIPFMTATAEAAPAPTSSSSSPAHHAASASASASASGSSTPFRSDDGAGASGSGGGGGGGGEAEVVEKEHMFDKVVTPSDVGKLNRLVIPKQYAEKYFPLDAAANEKGLLLNFEDRAGKPWRFRYSYWNSSQSYVMTKGWSRFVKEKRLDAGDTVSFSRGIGDEAARHRLFIDWKRRADTRDPLRLPRGLPLPMPLTSHYAPWGIGGGGGFFVQPSPPATLYEHRLRQGLDFRAFNPAAAMGRQVLLFGSARIPPQAPLLARAPSPLHHHYTLQPSGDGVRAAGSPVVLDSVPVIESPTTAAKRVRLFGVNLDNPHAGGGGGAAAGESSNHGNALSLQTPAWMRRDPTLRLLELPPHHHHGAESSAASSPSSSSSSKRDAHSALDLDL.

A disordered region spans residues methionine 1–alanine 87. A compositionally biased stretch (low complexity) spans threonine 30–proline 65. Over residues glycine 73–glutamate 86 the composition is skewed to gly residues. Residues phenylalanine 96–arginine 200 constitute a DNA-binding region (TF-B3). The interval arginine 374–leucine 412 is disordered. Low complexity predominate over residues glutamate 387–serine 399. The span at serine 400–leucine 412 shows a compositional bias: basic and acidic residues.

The protein resides in the nucleus. This is B3 domain-containing protein Os02g0683500 from Oryza sativa subsp. japonica (Rice).